A 252-amino-acid chain; its full sequence is Beta-crystallin B1 (252 aa).

2 stretches are compositionally biased toward low complexity: residues 1 to 15 (MSQA…TVAV) and 24 to 37 (KGAP…SPGT). Residues 1–42 (MSQAAKASASATVAVNPGPDTKGKGAPPAGTSPSPGTTLAPT) are disordered. Position 2 is an N-acetylserine (S2). The N-terminal arm stretch occupies residues 2-58 (SQAAKASASATVAVNPGPDTKGKGAPPAGTSPSPGTTLAPTTVPITSAKAAELPPGN). Beta/gamma crystallin 'Greek key' domains follow at residues 59–98 (YRLV…IVSA) and 99–143 (GPWV…RPIK). The tract at residues 144 to 148 (MDAQE) is connecting peptide. 2 Beta/gamma crystallin 'Greek key' domains span residues 149–190 (HKIS…KVSS) and 191–233 (GTWV…RRLR). Residues 235 to 252 (KQWHLEGSFPVLATEPPK) form a C-terminal arm region.

Belongs to the beta/gamma-crystallin family. As to quaternary structure, homo/heterodimer, or complexes of higher-order. The structure of beta-crystallin oligomers seems to be stabilized through interactions between the N-terminal arms. Specific cleavages in the N-terminal arm occur during lens maturation and give rise to truncated forms, leading to impaired oligomerization and protein insolubilization.

Its function is as follows. Crystallins are the dominant structural components of the vertebrate eye lens. The polypeptide is Beta-crystallin B1 (CRYBB1) (Homo sapiens (Human)).